The chain runs to 165 residues: Late embryogenesis abundant protein D-113 (165 aa).

The segment covering 1–13 (MQSMKDAAASAKA) has biased composition (low complexity). 2 disordered regions span residues 1–76 (MQSM…IGGT) and 92–165 (GGTG…YRSY). A compositionally biased stretch (basic and acidic residues) spans 14–60 (GMEKAKASMQEKVDQMKTRDPNEKEMARERKEERQEDAELRKQEARH). The span at 67 to 76 (HVGGGGIGGT) shows a compositional bias: gly residues. Residues 132–155 (TTGNQDFPNAASNNAGTRRNTRGG) show a composition bias toward polar residues.

Belongs to the LEA type 1 family.

In terms of biological role, LEA proteins are late embryonic proteins abundant in higher plant seed embryos. There are two subsets of LEA proteins (5a and 5b), the first ones are expressed when the cotyledon weight reach 80 mg and the second set are expressed above 100 mg. The function of those proteins is not known. The chain is Late embryogenesis abundant protein D-113 from Gossypium hirsutum (Upland cotton).